The following is a 427-amino-acid chain: Histidine--tRNA ligase (427 aa).

The protein belongs to the class-II aminoacyl-tRNA synthetase family. In terms of assembly, homodimer.

The protein localises to the cytoplasm. The catalysed reaction is tRNA(His) + L-histidine + ATP = L-histidyl-tRNA(His) + AMP + diphosphate + H(+). This chain is Histidine--tRNA ligase, found in Corynebacterium urealyticum (strain ATCC 43042 / DSM 7109).